We begin with the raw amino-acid sequence, 416 residues long: MALTSSAESPVPVREVARQIGLWVGRLGRIWVDGQLTQIKIRPGTNTVFFNLRDPSANVTLLATCPRQVFECIEPKPTEGLRVAVLGKPEFYVPRGSLQLVVHDIRPIGIGDLLARLERLKKILAAEGLFAPERKRPLPFLPRVVGLICGRGSAAERDVVENARRRWPAVRFDIAAVAVQGPYAVPEIVAALRRLDDDPVVDVIVIARGGGSVEDLLPFSDETLLRAVAACRTPVVSAIGHETDTPLLDFVADVAASTPTDAARRIVPDVAEQYAQLAQLGDRLRNALRHRIDREQQVLDTLRSRPVLAHPVQDINRRGEEILRLVRAGRTALDTAIRAADADARHLVARLRALAPAATLERGYAIVLDPAGRVIRGADEVQTGDELVVRLGRGRLRVTVTDVAPAETDHPLGSLA.

Belongs to the XseA family. Heterooligomer composed of large and small subunits.

The protein localises to the cytoplasm. The enzyme catalyses Exonucleolytic cleavage in either 5'- to 3'- or 3'- to 5'-direction to yield nucleoside 5'-phosphates.. Functionally, bidirectionally degrades single-stranded DNA into large acid-insoluble oligonucleotides, which are then degraded further into small acid-soluble oligonucleotides. The sequence is that of Exodeoxyribonuclease 7 large subunit from Acidothermus cellulolyticus (strain ATCC 43068 / DSM 8971 / 11B).